The following is a 351-amino-acid chain: Transaldolase (351 aa).

The active-site Schiff-base intermediate with substrate is the lysine 138.

The protein belongs to the transaldolase family. Type 2 subfamily.

The protein localises to the cytoplasm. The enzyme catalyses D-sedoheptulose 7-phosphate + D-glyceraldehyde 3-phosphate = D-erythrose 4-phosphate + beta-D-fructose 6-phosphate. Its pathway is carbohydrate degradation; pentose phosphate pathway; D-glyceraldehyde 3-phosphate and beta-D-fructose 6-phosphate from D-ribose 5-phosphate and D-xylulose 5-phosphate (non-oxidative stage): step 2/3. Transaldolase is important for the balance of metabolites in the pentose-phosphate pathway. This chain is Transaldolase, found in Neisseria meningitidis serogroup C (strain 053442).